Consider the following 1023-residue polypeptide: MGSVLYSLSESANLYPASELFLRHRLQIVEELWESVLRQECGQNMVDLLRQLRDLCSPEGQATKDQAVSAVKLIEQLNINEAIRAARAFALYFQLINIIEQEYEQRQQLTRYSDLEAETAPLNGSENITSSSNHNEDDVIFNRGLGTDFLGKNWTNRGQGKQKGTFAALFPLLSKLNVPPQQIQRLISQLDVRLVFTAHPTEIVRHTIRDKQRQVVDLLQQLDEVENRAKEGGGYPWEAGEIREKLLEEIRLWWRTDELHQFKPTVLDEVDYALHYFQEVLFDGIPQLYKRFKYALNQTFSWLEPPSKDFCSFGSWVGSDRDGNPSVTPEITWQTACYQRKMVLERYIKSVKQLIELLSISMHWSDVLPDLLESLELDQSQLSEVYDALALRYRQEPYRLKLAYVLKRLENTRDRNLALYKGETPTNEDSPMYRSGAEFLAELRLIQHNLTETGLSCRELDNLICQVEIFDFNLTKLDIRQESTRHSDALNEILDYLQLLPQPYNDLSEEQRVAWLTTELQTRRPLISSELPFSDKTNDVIKTFRVVRSLQQEFGINICQTYIISMCRQVSDVLEVLLLAKEARLFDPAIAVGTIQVVPLFETVEDLQRSRSVMRQLFELPLYRALLAGGYKSTEVKVPSPESTPLPTPHSVLTPDLQEVMLGYSDSNKDSGFLSSNWEIHKAQKSLQKIAEEYGVNLRIFHGRGGSVGRGGGPAHEAILAQPGHSINGRIKITEQGEVLASKYSLLDLALYNLETITTAVIQASLLRTGFDDIEPWNEIMEELAARSRQHYRGLIYEQPDFIDFFHQVTPIEEISQLQISSRPARRPSGKKDLSSLRAIPWVFSWTQTRFLLPSWYGVGTALQEFFNEEPEEHLKLMRYFYVKWPFFKMVISKVEMTLAKVDMQMAGHYVQELSDPEDKSRFEKVFEQIANEYYLTRDLVLKITDHSRLLDGDPVLQRSVQLRNGTIVPLGFIQVSLLKRLRQSKNNNATSGVIHSRYSKGELLRGALLTINGIAAGMRNTG.

Catalysis depends on residues H199 and K669.

Belongs to the PEPCase type 1 family. The cofactor is Mg(2+).

It catalyses the reaction oxaloacetate + phosphate = phosphoenolpyruvate + hydrogencarbonate. Functionally, forms oxaloacetate, a four-carbon dicarboxylic acid source for the tricarboxylic acid cycle. This is Phosphoenolpyruvate carboxylase from Trichormus variabilis (strain ATCC 29413 / PCC 7937) (Anabaena variabilis).